The following is a 298-amino-acid chain: Inosose dehydratase (298 aa).

This sequence belongs to the IolE/MocC family. Glutathione serves as cofactor. Co(2+) is required as a cofactor. Requires Mn(2+) as cofactor.

The enzyme catalyses scyllo-inosose = 3D-3,5/4-trihydroxycyclohexane-1,2-dione + H2O. The protein operates within polyol metabolism; myo-inositol degradation into acetyl-CoA; acetyl-CoA from myo-inositol: step 2/7. Its function is as follows. Catalyzes the dehydration of inosose (2-keto-myo-inositol, 2KMI or 2,4,6/3,5-pentahydroxycyclohexanone) to 3D-(3,5/4)-trihydroxycyclohexane-1,2-dione (D-2,3-diketo-4-deoxy-epi-inositol). The sequence is that of Inosose dehydratase from Clostridium beijerinckii (strain ATCC 51743 / NCIMB 8052) (Clostridium acetobutylicum).